The following is a 514-amino-acid chain: Cytochrome c-552 (514 aa).

Residues 1-21 (MKFKLLLAGSLVAVGAMALLA) form the signal peptide. The heme c site is built by H101, C129, C132, K133, C167, C170, H171, C210, C213, and H214. The Ca(2+) site is built by E216, Y217, K279, and Q281. Y217 is a binding site for substrate. Residue H282 participates in substrate binding. Heme c-binding residues include H293, C300, C303, H304, H318, C332, C335, H336, and H411.

This sequence belongs to the cytochrome c-552 family. Homodimer. Probably also exists as a membrane-associated heterooligomeric complex. It depends on Ca(2+) as a cofactor. Heme c serves as cofactor.

It is found in the periplasm. The enzyme catalyses 6 Fe(III)-[cytochrome c] + NH4(+) + 2 H2O = 6 Fe(II)-[cytochrome c] + nitrite + 8 H(+). Its pathway is nitrogen metabolism; nitrate reduction (assimilation). Catalyzes the reduction of nitrite to ammonia, consuming six electrons in the process. Has very low activity toward hydroxylamine, and even lower activity toward sulfite. Sulfite reductase activity is maximal at neutral pH. The chain is Cytochrome c-552 (nrfA) from Sulfurospirillum deleyianum.